The chain runs to 306 residues: Mycothiol acetyltransferase (306 aa).

N-acetyltransferase domains follow at residues 17–163 and 166–306; these read VARV…RPMP and LALS…YRRA. Glutamate 48 provides a ligand contact to 1D-myo-inositol 2-(L-cysteinylamino)-2-deoxy-alpha-D-glucopyranoside. Residue 89 to 91 coordinates acetyl-CoA; it reads IVV. 1D-myo-inositol 2-(L-cysteinylamino)-2-deoxy-alpha-D-glucopyranoside-binding residues include glutamate 192, lysine 232, and glutamate 239. Acetyl-CoA-binding positions include 243–245 and 250–256; these read LGV and AARGLGS. Tyrosine 277 contacts 1D-myo-inositol 2-(L-cysteinylamino)-2-deoxy-alpha-D-glucopyranoside.

This sequence belongs to the acetyltransferase family. MshD subfamily. In terms of assembly, monomer.

The catalysed reaction is 1D-myo-inositol 2-(L-cysteinylamino)-2-deoxy-alpha-D-glucopyranoside + acetyl-CoA = mycothiol + CoA + H(+). Its function is as follows. Catalyzes the transfer of acetyl from acetyl-CoA to desacetylmycothiol (Cys-GlcN-Ins) to form mycothiol. This is Mycothiol acetyltransferase from Clavibacter michiganensis subsp. michiganensis (strain NCPPB 382).